A 68-amino-acid chain; its full sequence is Small ribosomal subunit protein bS21 (68 aa).

The tract at residues 35–68 (HYEKPSEKRARERAAAVRRARKMERKRMERDGIK) is disordered. A compositionally biased stretch (basic and acidic residues) spans 37–49 (EKPSEKRARERAA). Over residues 50–59 (AVRRARKMER) the composition is skewed to basic residues.

This sequence belongs to the bacterial ribosomal protein bS21 family.

The chain is Small ribosomal subunit protein bS21 from Sphingopyxis alaskensis (strain DSM 13593 / LMG 18877 / RB2256) (Sphingomonas alaskensis).